Reading from the N-terminus, the 669-residue chain is RNA-binding protein 14 (669 aa).

2 consecutive RRM domains span residues 1–73 and 79–149; these read MKIF…MSRP and WKIF…LSTK. Glycyl lysine isopeptide (Lys-Gly) (interchain with G-Cter in SUMO2) cross-links involve residues Lys-126, Lys-135, Lys-138, Lys-149, and Lys-153. Disordered regions lie at residues 147 to 175 and 193 to 232; these read STKGQKKGPGLAVQSGDKTKKPGAGDTAF and NSTGGFDGQARQPTPPFFGRDRSPLRRSPPRASYVAPLTA. Ser-161 is modified (phosphoserine). Lys-164 bears the N6-acetyllysine; alternate mark. Lys-164 is covalently cross-linked (Glycyl lysine isopeptide (Lys-Gly) (interchain with G-Cter in SUMO2); alternate). Thr-206 bears the Phosphothreonine mark. 6 positions are modified to phosphoserine: Ser-220, Ser-242, Ser-244, Ser-256, Ser-272, and Ser-280. A disordered region spans residues 284 to 303; sequence PYRGQLASPSSQSAAASSLG. Over residues 287–303 the composition is skewed to low complexity; it reads GQLASPSSQSAAASSLG. Positions 307–354 are TRBP-interacting domain; interaction with STIL; sequence GAQPSASALSSYGGQAAAASSLNSYGAQGSSLASYGNQPSSYGAQAAS. Residues Ser-520, Ser-523, Ser-527, and Ser-562 each carry the phosphoserine modification. The tract at residues 566–592 is disordered; sequence VANANSTPPPYERTRLSPPRASYDDPY. Thr-572 bears the Phosphothreonine mark. At Ser-582 the chain carries Phosphoserine. Lys-600 is covalently cross-linked (Glycyl lysine isopeptide (Lys-Gly) (interchain with G-Cter in SUMO2)). Ser-618, Ser-620, Ser-623, Ser-627, Ser-643, and Ser-649 each carry phosphoserine.

In terms of assembly, interacts with NCOA6, CITED1 and XRCC5/KU86. Interacts with SS18. Interacts with STIL and interferes with its interaction with CPAP. Interacts with gamma-tubulin. Part of the HDP-RNP complex composed of at least HEXIM1, PRKDC, XRCC5, XRCC6, paraspeckle proteins (SFPQ, NONO, PSPC1, RBM14, and MATR3) and NEAT1 RNA.

It is found in the nucleus. Its subcellular location is the nucleolus. The protein resides in the cytoplasm. Functionally, may function as a nuclear receptor coactivator, enhancing transcription through other coactivators such as NCOA6 and CITED1. Regulates centriole biogenesis by suppressing the formation of aberrant centriolar protein complexes in the cytoplasm and thus preserving mitotic spindle integrity. Prevents the formation of the STIL-CPAP complex (which can induce the formation of aberrant centriolar protein complexes) by interfering with the interaction of STIL with CPAP. Plays a role in the regulation of DNA virus-mediated innate immune response by assembling into the HDP-RNP complex, a complex that serves as a platform for IRF3 phosphorylation and subsequent innate immune response activation through the cGAS-STING pathway. The chain is RNA-binding protein 14 (RBM14) from Pongo abelii (Sumatran orangutan).